We begin with the raw amino-acid sequence, 66 residues long: Large ribosomal subunit protein uL29 (66 aa).

This sequence belongs to the universal ribosomal protein uL29 family.

In Rhizobium johnstonii (strain DSM 114642 / LMG 32736 / 3841) (Rhizobium leguminosarum bv. viciae), this protein is Large ribosomal subunit protein uL29.